Here is a 231-residue protein sequence, read N- to C-terminus: Protein OPG061 (231 aa).

It belongs to the orthopoxvirus OPG058 family.

Its subcellular location is the host nucleus. The protein resides in the host nucleolus. The protein is Protein OPG061 (OPG061) of Variola virus.